The primary structure comprises 363 residues: Probable aminomethyltransferase (363 aa).

Belongs to the GcvT family. In terms of assembly, the glycine cleavage system is composed of four proteins: P, T, L and H.

The catalysed reaction is N(6)-[(R)-S(8)-aminomethyldihydrolipoyl]-L-lysyl-[protein] + (6S)-5,6,7,8-tetrahydrofolate = N(6)-[(R)-dihydrolipoyl]-L-lysyl-[protein] + (6R)-5,10-methylene-5,6,7,8-tetrahydrofolate + NH4(+). In terms of biological role, the glycine cleavage system catalyzes the degradation of glycine. The sequence is that of Probable aminomethyltransferase from Haloarcula marismortui (strain ATCC 43049 / DSM 3752 / JCM 8966 / VKM B-1809) (Halobacterium marismortui).